Consider the following 124-residue polypeptide: Phosphoribosyl-ATP pyrophosphatase (124 aa).

It belongs to the PRA-PH family.

It is found in the cytoplasm. The catalysed reaction is 1-(5-phospho-beta-D-ribosyl)-ATP + H2O = 1-(5-phospho-beta-D-ribosyl)-5'-AMP + diphosphate + H(+). It functions in the pathway amino-acid biosynthesis; L-histidine biosynthesis; L-histidine from 5-phospho-alpha-D-ribose 1-diphosphate: step 2/9. This Ralstonia nicotianae (strain ATCC BAA-1114 / GMI1000) (Ralstonia solanacearum) protein is Phosphoribosyl-ATP pyrophosphatase (hisE).